The sequence spans 334 residues: Heme A synthase (334 aa).

The next 5 membrane-spanning stretches (helical) occupy residues 6-26 (ITRW…IGGI), 93-113 (GRIT…QGVI), 119-139 (LPYI…WYMV), 154-174 (LAFH…QLIK), and 189-209 (LIFS…GALV). His-253 contacts heme. Transmembrane regions (helical) follow at residues 255–275 (LGGF…FKVK), 282–302 (IAYF…ITIV), and 305–325 (VPII…SIII). His-313 lines the heme pocket.

This sequence belongs to the COX15/CtaA family. Type 2 subfamily. Interacts with CtaB. Requires heme b as cofactor.

Its subcellular location is the cell membrane. The catalysed reaction is Fe(II)-heme o + 2 A + H2O = Fe(II)-heme a + 2 AH2. It participates in porphyrin-containing compound metabolism; heme A biosynthesis; heme A from heme O: step 1/1. Functionally, catalyzes the conversion of heme O to heme A by two successive hydroxylations of the methyl group at C8. The first hydroxylation forms heme I, the second hydroxylation results in an unstable dihydroxymethyl group, which spontaneously dehydrates, resulting in the formyl group of heme A. This Rickettsia prowazekii (strain Madrid E) protein is Heme A synthase.